The following is a 232-amino-acid chain: MSNYRDIAWQGLWKNNPGLVQLLGLCPLLAVTATLTNAIGLGLATLVVLVGSNVLVSLVREFVPKEIRIPVFVMIIAALVTCVQLLINAYAYGLYLSLGIFLPLIVTNCVIIGRAEAFASRNSVVKAAFDGLMMGLGFTLVLMLLGACREILGQGTLFDGADLLLGDWAKGLTIHLWQVDTNFLLAMLPPGAFIAMGFLIAIKNMIDKQLEARKPALEAAPAVTRARITKVS.

6 helical membrane passes run 18 to 38 (GLVQ…LTNA), 39 to 59 (IGLG…VSLV), 69 to 89 (IPVF…LINA), 93 to 113 (GLYL…VIIG), 127 to 147 (AAFD…LLGA), and 182 to 202 (NFLL…LIAI).

This sequence belongs to the NqrDE/RnfAE family. In terms of assembly, the complex is composed of six subunits: RnfA, RnfB, RnfC, RnfD, RnfE and RnfG.

The protein localises to the cell inner membrane. In terms of biological role, part of a membrane-bound complex that couples electron transfer with translocation of ions across the membrane. The sequence is that of Ion-translocating oxidoreductase complex subunit E from Shewanella loihica (strain ATCC BAA-1088 / PV-4).